The following is a 369-amino-acid chain: Caffeine synthase 1 (369 aa).

S-adenosyl-L-homocysteine is bound at residue Tyr-24. Thr-31 contacts caffeine. Positions 66, 71, 103, 104, 138, and 139 each coordinate S-adenosyl-L-homocysteine. Residues Tyr-156, His-159, and Trp-160 each contribute to the caffeine site. Residue Asn-177 participates in Mg(2+) binding. A caffeine-binding site is contributed by Arg-225. Asp-263, Phe-265, and Asn-266 together coordinate Mg(2+). Position 321 (Phe-321) interacts with caffeine.

This sequence belongs to the methyltransferase superfamily. Type-7 methyltransferase family. Mg(2+) is required as a cofactor.

It catalyses the reaction theobromine + S-adenosyl-L-methionine = caffeine + S-adenosyl-L-homocysteine + H(+). The catalysed reaction is 7-methylxanthine + S-adenosyl-L-methionine = theobromine + S-adenosyl-L-homocysteine + H(+). The protein operates within alkaloid biosynthesis. Functionally, involved in the biosynthesis of caffeine. Catalyzes the conversion of 7-methylxanthine (7mX) to theobromine and of theobromine to caffeine. This chain is Caffeine synthase 1, found in Camellia taliensis (Wild tea).